Consider the following 485-residue polypeptide: MKVLFAVSECAPFAKSGGLADVAGALPKELRRLGIDARVMLPKYETIAPEWKKKMKKVAELIVPVGWRRQYCGVEELRHDGVIYYFIDNEYYFKRPQLYGHYDDGERFAYFCRAVLEVLPEIQFQPDVIHCHDWHTGMVPFLLREQYRHELFYVDMRTVFTIHNLQFQGLFPRGILEDLLNLDGRYFTVDHLEFYGCVSFMKGALVASDLITTVSPTYKEEIQTAYYGERLDGLLRARRDDLLGILNGIDDEFYNPEADPFLTATYSVHTRERKQLNKRALQRQFGLPEWDDVPLIAMVTRMTAQKGLDLVTCVFHEMMSEDMQLVVLGTGDWRFEQFFSQMAAAYPGKVGVYIGFHEPLAHQIYAGADLFLIPSLFEPCGLSQMIALRYGTIPIVRETGGLNDTVQSYNEITKEGNGFSFTNFNAHDMLYTIRRALSFYRQPSVWEQLTERAMRGDYSWRRSANQYKQAYEQLIKKEEHTLVHG.

Lysine 15 provides a ligand contact to ADP-alpha-D-glucose.

The protein belongs to the glycosyltransferase 1 family. Bacterial/plant glycogen synthase subfamily.

It catalyses the reaction [(1-&gt;4)-alpha-D-glucosyl](n) + ADP-alpha-D-glucose = [(1-&gt;4)-alpha-D-glucosyl](n+1) + ADP + H(+). Its pathway is glycan biosynthesis; glycogen biosynthesis. Synthesizes alpha-1,4-glucan chains using ADP-glucose. The polypeptide is Glycogen synthase (glgA) (Geobacillus stearothermophilus (Bacillus stearothermophilus)).